The following is a 411-amino-acid chain: Serine hydroxymethyltransferase (411 aa).

Residues L119 and 123–125 contribute to the (6S)-5,6,7,8-tetrahydrofolate site; that span reads GHL. N6-(pyridoxal phosphate)lysine is present on K228.

This sequence belongs to the SHMT family. Homodimer. Pyridoxal 5'-phosphate serves as cofactor.

It is found in the cytoplasm. The catalysed reaction is (6R)-5,10-methylene-5,6,7,8-tetrahydrofolate + glycine + H2O = (6S)-5,6,7,8-tetrahydrofolate + L-serine. The protein operates within one-carbon metabolism; tetrahydrofolate interconversion. Its pathway is amino-acid biosynthesis; glycine biosynthesis; glycine from L-serine: step 1/1. In terms of biological role, catalyzes the reversible interconversion of serine and glycine with tetrahydrofolate (THF) serving as the one-carbon carrier. This reaction serves as the major source of one-carbon groups required for the biosynthesis of purines, thymidylate, methionine, and other important biomolecules. Also exhibits THF-independent aldolase activity toward beta-hydroxyamino acids, producing glycine and aldehydes, via a retro-aldol mechanism. The chain is Serine hydroxymethyltransferase from Clostridium kluyveri (strain NBRC 12016).